The primary structure comprises 447 residues: GTPase Der (447 aa).

2 consecutive EngA-type G domains span residues 3–167 (PVVA…HLED) and 180–353 (IKLA…KAAN). GTP is bound by residues 9–16 (GRPNVGKS), 56–60 (DTGGF), 119–122 (NKAE), 186–193 (GRPNVGKS), 233–237 (DTAGL), and 298–301 (NKWD). In terms of domain architecture, KH-like spans 354 to 438 (CKMSTPILTR…PMRIEFKSST (85 aa)).

Belongs to the TRAFAC class TrmE-Era-EngA-EngB-Septin-like GTPase superfamily. EngA (Der) GTPase family. As to quaternary structure, associates with the 50S ribosomal subunit.

Functionally, GTPase that plays an essential role in the late steps of ribosome biogenesis. The protein is GTPase Der of Albidiferax ferrireducens (strain ATCC BAA-621 / DSM 15236 / T118) (Rhodoferax ferrireducens).